The sequence spans 393 residues: MHRITILGATGSIGESTLDVIRRHPGRYAAHALSAHRQVRKLADQCIEFRPARAVVGTAEAARELETLLRDASVATEVSYGEAALESIAADAQTDAVMAAIVGAAGLRPTLAAARAGKRVLLANKEALVMSGRIFMDAVREHGATLLPIDSEHNAIFQCLPADDPRYGRGVAKVLLTASGGPFRTRDPATLHDISPDQACAHPNWVMGRKISVDSATMMNKGLEVIEAHWLFGAPAERIEVLIHPQSIVHSMVAYTDGSVLAQLGNPDMRTPIAYGLAYPERIDAGVTPLDLTLAGGLHFEKPDLARFPCLGLAFDALRAAGVAPAVLNAANEVGVEAFLAGQVRFTDIAGIVRQVLEEAPSGPADTLEAVLAADALAREAARAGVTARAAAR.

T10, G11, S12, I13, R37, Q38, and N124 together coordinate NADPH. K125 contacts 1-deoxy-D-xylulose 5-phosphate. An NADPH-binding site is contributed by E126. Position 150 (D150) interacts with Mn(2+). Residues S151, E152, S179, and H202 each coordinate 1-deoxy-D-xylulose 5-phosphate. Mn(2+) is bound at residue E152. G208 lines the NADPH pocket. 4 residues coordinate 1-deoxy-D-xylulose 5-phosphate: S215, N220, K221, and E224. E224 contributes to the Mn(2+) binding site.

Belongs to the DXR family. Mg(2+) serves as cofactor. Requires Mn(2+) as cofactor.

The catalysed reaction is 2-C-methyl-D-erythritol 4-phosphate + NADP(+) = 1-deoxy-D-xylulose 5-phosphate + NADPH + H(+). It participates in isoprenoid biosynthesis; isopentenyl diphosphate biosynthesis via DXP pathway; isopentenyl diphosphate from 1-deoxy-D-xylulose 5-phosphate: step 1/6. Functionally, catalyzes the NADPH-dependent rearrangement and reduction of 1-deoxy-D-xylulose-5-phosphate (DXP) to 2-C-methyl-D-erythritol 4-phosphate (MEP). In Cupriavidus taiwanensis (strain DSM 17343 / BCRC 17206 / CCUG 44338 / CIP 107171 / LMG 19424 / R1) (Ralstonia taiwanensis (strain LMG 19424)), this protein is 1-deoxy-D-xylulose 5-phosphate reductoisomerase.